The chain runs to 100 residues: Urease subunit gamma (100 aa).

It belongs to the urease gamma subunit family. Heterotrimer of UreA (gamma), UreB (beta) and UreC (alpha) subunits. Three heterotrimers associate to form the active enzyme.

Its subcellular location is the cytoplasm. The enzyme catalyses urea + 2 H2O + H(+) = hydrogencarbonate + 2 NH4(+). It functions in the pathway nitrogen metabolism; urea degradation; CO(2) and NH(3) from urea (urease route): step 1/1. The protein is Urease subunit gamma of Cupriavidus metallidurans (strain ATCC 43123 / DSM 2839 / NBRC 102507 / CH34) (Ralstonia metallidurans).